We begin with the raw amino-acid sequence, 428 residues long: Serine--tRNA ligase (428 aa).

235–237 (TAE) is an L-serine binding site. Residue 266 to 268 (RSE) coordinates ATP. Glutamate 289 is a binding site for L-serine. 353–356 (EISS) lines the ATP pocket. An L-serine-binding site is contributed by serine 389.

The protein belongs to the class-II aminoacyl-tRNA synthetase family. Type-1 seryl-tRNA synthetase subfamily. Homodimer. The tRNA molecule binds across the dimer.

It is found in the cytoplasm. The enzyme catalyses tRNA(Ser) + L-serine + ATP = L-seryl-tRNA(Ser) + AMP + diphosphate + H(+). The catalysed reaction is tRNA(Sec) + L-serine + ATP = L-seryl-tRNA(Sec) + AMP + diphosphate + H(+). It participates in aminoacyl-tRNA biosynthesis; selenocysteinyl-tRNA(Sec) biosynthesis; L-seryl-tRNA(Sec) from L-serine and tRNA(Sec): step 1/1. In terms of biological role, catalyzes the attachment of serine to tRNA(Ser). Is also able to aminoacylate tRNA(Sec) with serine, to form the misacylated tRNA L-seryl-tRNA(Sec), which will be further converted into selenocysteinyl-tRNA(Sec). The polypeptide is Serine--tRNA ligase (Pasteurella multocida (strain Pm70)).